The following is a 361-amino-acid chain: tRNA-specific 2-thiouridylase MnmA (361 aa).

ATP contacts are provided by residues 10–17 (GMSGGVDS) and Met36. Cys104 acts as the Nucleophile in catalysis. Cys104 and Cys202 are disulfide-bonded. An ATP-binding site is contributed by Gly128. The interval 152–154 (KDQ) is interaction with tRNA. Cys202 (cysteine persulfide intermediate) is an active-site residue. Positions 308 to 309 (RY) are interaction with tRNA.

This sequence belongs to the MnmA/TRMU family.

It is found in the cytoplasm. It catalyses the reaction S-sulfanyl-L-cysteinyl-[protein] + uridine(34) in tRNA + AH2 + ATP = 2-thiouridine(34) in tRNA + L-cysteinyl-[protein] + A + AMP + diphosphate + H(+). Catalyzes the 2-thiolation of uridine at the wobble position (U34) of tRNA, leading to the formation of s(2)U34. This chain is tRNA-specific 2-thiouridylase MnmA, found in Clostridioides difficile (strain 630) (Peptoclostridium difficile).